We begin with the raw amino-acid sequence, 423 residues long: MNLLDYKSRPILSLTSIFAAWKSFLLAIALGASIGPDYDTSTSLFFAIVHGASSPRSLATRLTRWDALYFMHDAVKGKVYEQEWAFGIGMPAAVRSICGLLNLQRWEALVAIAISHVSHLVAVLALYQLTIVLCNDRKLAYLASVVHVLSPAGLFISAPYAESPFACMSFVGNLLYAISLKSSPDSLKRNLAVVGAGLSYGISCTLRSNGLFGGVLFAVETVKCLLALRNGFSISKILRLVAPLIGGILVAVGFVAPQVLAWMRYCNGNEEQRAWCGHRIPSIYTFVQAEYWDVGFLKYWTPNQIPLFLLAAPMLTILLKSGTETMREPSRGLGAVAMGTNEESRLLVRTLAAIQTLLAVLAITNYHVQIISRLSSGYPVWYWWVASCLMDKQRQSLGYGVIVFITMYAAIQGGLFASFLPPA.

9 consecutive transmembrane segments (helical) span residues 11–31 (ILSL…IALG), 106–126 (WEAL…VLAL), 139–159 (LAYL…ISAP), 160–180 (YAES…AISL), 197–219 (GLSY…LFAV), 240–260 (LVAP…PQVL), 299–319 (YWTP…TILL), 351–371 (LAAI…VQII), and 400–420 (GVIV…ASFL).

It belongs to the PIGV family.

Its subcellular location is the endoplasmic reticulum membrane. It functions in the pathway glycolipid biosynthesis; glycosylphosphatidylinositol-anchor biosynthesis. Its function is as follows. Mannosyltransferase involved in glycosylphosphatidylinositol-anchor biosynthesis. Transfers the second mannose to the glycosylphosphatidylinositol during GPI precursor assembly. The sequence is that of GPI mannosyltransferase 2 (GPI18) from Gibberella zeae (strain ATCC MYA-4620 / CBS 123657 / FGSC 9075 / NRRL 31084 / PH-1) (Wheat head blight fungus).